The chain runs to 226 residues: Adenosine 5'-phosphosulfate reductase (226 aa).

[4Fe-4S] cluster-binding residues include C112, C113, C195, and C198. C221 serves as the catalytic Nucleophile; cysteine thiosulfonate intermediate.

Belongs to the PAPS reductase family. CysH subfamily. [4Fe-4S] cluster is required as a cofactor.

The protein localises to the cytoplasm. The catalysed reaction is [thioredoxin]-disulfide + sulfite + AMP + 2 H(+) = adenosine 5'-phosphosulfate + [thioredoxin]-dithiol. It participates in sulfur metabolism; hydrogen sulfide biosynthesis; sulfite from sulfate. Functionally, catalyzes the formation of sulfite from adenosine 5'-phosphosulfate (APS) using thioredoxin as an electron donor. This Bacillus anthracis (strain A0248) protein is Adenosine 5'-phosphosulfate reductase.